Consider the following 268-residue polypeptide: Endonuclease 8 1 (268 aa).

P2 acts as the Schiff-base intermediate with DNA in catalysis. E3 functions as the Proton donor in the catalytic mechanism. The Proton donor; for beta-elimination activity role is filled by K52. 2 residues coordinate DNA: R125 and N166. An FPG-type zinc finger spans residues 234-268 (YVYRRAGEPCRVCGGVIRTALLEGRNVFWCPVCQT). The Proton donor; for delta-elimination activity role is filled by R258.

The protein belongs to the FPG family. Zn(2+) is required as a cofactor.

It catalyses the reaction 2'-deoxyribonucleotide-(2'-deoxyribose 5'-phosphate)-2'-deoxyribonucleotide-DNA = a 3'-end 2'-deoxyribonucleotide-(2,3-dehydro-2,3-deoxyribose 5'-phosphate)-DNA + a 5'-end 5'-phospho-2'-deoxyribonucleoside-DNA + H(+). Functionally, involved in base excision repair of DNA damaged by oxidation or by mutagenic agents. Acts as a DNA glycosylase that recognizes and removes damaged bases. Has AP (apurinic/apyrimidinic) lyase activity and introduces nicks in the DNA strand. Cleaves the DNA backbone by beta-delta elimination to generate a single-strand break at the site of the removed base with both 3'- and 5'-phosphates. In Mycobacterium bovis (strain ATCC BAA-935 / AF2122/97), this protein is Endonuclease 8 1 (nei1).